The following is a 201-amino-acid chain: Dimethylsulfoniopropionate lyase DddQ (201 aa).

H130, E134, Y136, and H169 together coordinate a divalent metal cation.

It belongs to the non-heme iron-dependent dioxygenase family. Homodimer. The cofactor is a divalent metal cation.

The enzyme catalyses S,S-dimethyl-beta-propiothetin = acrylate + dimethyl sulfide + H(+). May act as a dimethylsulfoniopropionate (DMSP) in vitro, releasing dimethyl sulfide (DMS). DMS is the principal form by which sulfur is transported from oceans to the atmosphere. The real activity of the protein is however subject to debate and it is unclear whether it constitutes a real dimethylsulfoniopropionate lyase in vivo. The sequence is that of Dimethylsulfoniopropionate lyase DddQ from Ruegeria pomeroyi (strain ATCC 700808 / DSM 15171 / DSS-3) (Silicibacter pomeroyi).